A 777-amino-acid polypeptide reads, in one-letter code: Translation initiation factor IF-2 (777 aa).

Disordered stretches follow at residues Ser-30 to Asn-54 and Glu-98 to Glu-117. A compositionally biased stretch (basic and acidic residues) spans Glu-98 to Ser-109. The tr-type G domain occupies Pro-279–Glu-449. The interval Gly-288–Thr-295 is G1. Gly-288–Thr-295 provides a ligand contact to GTP. The segment at Gly-313–His-317 is G2. The G3 stretch occupies residues Asp-334–Gly-337. GTP is bound by residues Asp-334 to His-338 and Asn-388 to Asp-391. Residues Asn-388–Asp-391 are G4. Residues Ser-425–Lys-427 form a G5 region.

This sequence belongs to the TRAFAC class translation factor GTPase superfamily. Classic translation factor GTPase family. IF-2 subfamily.

The protein resides in the cytoplasm. Its function is as follows. One of the essential components for the initiation of protein synthesis. Protects formylmethionyl-tRNA from spontaneous hydrolysis and promotes its binding to the 30S ribosomal subunits. Also involved in the hydrolysis of GTP during the formation of the 70S ribosomal complex. The polypeptide is Translation initiation factor IF-2 (Wolbachia sp. subsp. Brugia malayi (strain TRS)).